The following is a 205-amino-acid chain: MQAPPSFYEGDTLEVAKKLLGQKLVHIVDGIKRSGIIVEVEAYKGPDDKAAHSYGGRRTDRTEVMFGAPGHAYVYLIYGMYHCFNVITAPVGTPQGVLIRALEPVDGIEEIKLARYNKTEITKAQYKNLTNGPGKLCRALGITLKERGVSLQSDTLHIELVPKEEHISSQYKITAGPRINIDYAEEAVHYPWRFYYEGHPFVSKK.

It belongs to the DNA glycosylase MPG family.

This chain is Putative 3-methyladenine DNA glycosylase, found in Bacillus cereus (strain ATCC 14579 / DSM 31 / CCUG 7414 / JCM 2152 / NBRC 15305 / NCIMB 9373 / NCTC 2599 / NRRL B-3711).